The primary structure comprises 381 residues: Gustatory and pheromone receptor 39a, isoform D (381 aa).

The Cytoplasmic portion of the chain corresponds to 1-43 (MKRNAFEELRVQLRTLKWLGVLRFTIDFNKCLVRENASEERSA). Residues 44-64 (WLYLIGVVGITCSLIVYSTYF) form a helical membrane-spanning segment. The Extracellular portion of the chain corresponds to 65-78 (PSHFIMGKHNTTGN). N74 carries an N-linked (GlcNAc...) asparagine glycan. The chain crosses the membrane as a helical span at residues 79 to 101 (CYALINIRSCSIVTMLIYTQLYI). Over 102–128 (QRFRFVALLQSILRFNQISGSHREEGR) the chain is Cytoplasmic. A helical membrane pass occupies residues 129–149 (FAFYYYTHLSLLIICMLNYAY). Residues 150–172 (GYWTAGVRLTTIPIYLLQYGFSY) are Extracellular-facing. Residues 173–193 (LFLGQVVVLFACIQQILLSIL) traverse the membrane as a helical segment. Residues 194-234 (KYYNQVVLKNIKSSKESREFYYNFCKYNQVIWLSYTEINHC) lie on the Cytoplasmic side of the membrane. The chain crosses the membrane as a helical span at residues 235 to 255 (FGLLLLLVTGLILLITPSGPF). Residues 256–273 (YLVSTIFEGRFRQNWQFS) lie on the Extracellular side of the membrane. Residues 274 to 294 (LMSFTAILWSLPWIVLLVLAM) form a helical membrane-spanning segment. The Cytoplasmic segment spans residues 295–350 (GRNDVQKEANKTAKMLTKVPRTGTGLDRMIEKFLLKNLRQKPILTAYGFFALDKST). Residues 351–371 (LFKLFTAIFTYMVILVQFKEM) traverse the membrane as a helical segment. Topologically, residues 372-381 (ENSTKSINKF) are extracellular. A glycan (N-linked (GlcNAc...) asparagine) is linked at N373.

Belongs to the insect chemoreceptor superfamily. Gustatory receptor (GR) family. Gr21a subfamily. As to expression, expressed in the adult labellar chemosensory neurons and adult thorax and abdomen.

The protein localises to the cell membrane. Gustatory receptor which mediates acceptance or avoidance behavior, depending on its substrates. Plays a role in sustaining courtship behavior in males, possibly through the reception of a stimulating arrestant pheromone. In Drosophila melanogaster (Fruit fly), this protein is Gustatory and pheromone receptor 39a, isoform D (Gr39a).